The sequence spans 454 residues: UPF0210 protein EUBELI_01067 (454 aa).

It belongs to the UPF0210 family. In terms of assembly, homodimer.

This Lachnospira eligens (strain ATCC 27750 / DSM 3376 / VPI C15-48 / C15-B4) (Eubacterium eligens) protein is UPF0210 protein EUBELI_01067.